The chain runs to 377 residues: Succinyl-diaminopimelate desuccinylase (377 aa).

H68 is a binding site for Zn(2+). D70 is a catalytic residue. Position 101 (D101) interacts with Zn(2+). E135 (proton acceptor) is an active-site residue. Residues E136, E164, and H350 each contribute to the Zn(2+) site.

It belongs to the peptidase M20A family. DapE subfamily. As to quaternary structure, homodimer. Requires Zn(2+) as cofactor. The cofactor is Co(2+).

It carries out the reaction N-succinyl-(2S,6S)-2,6-diaminopimelate + H2O = (2S,6S)-2,6-diaminopimelate + succinate. The protein operates within amino-acid biosynthesis; L-lysine biosynthesis via DAP pathway; LL-2,6-diaminopimelate from (S)-tetrahydrodipicolinate (succinylase route): step 3/3. Its function is as follows. Catalyzes the hydrolysis of N-succinyl-L,L-diaminopimelic acid (SDAP), forming succinate and LL-2,6-diaminopimelate (DAP), an intermediate involved in the bacterial biosynthesis of lysine and meso-diaminopimelic acid, an essential component of bacterial cell walls. This chain is Succinyl-diaminopimelate desuccinylase, found in Acinetobacter baumannii (strain AB307-0294).